Reading from the N-terminus, the 2963-residue chain is tRNA nuclease CdiA (2963 aa).

The first 29 residues, 1 to 29 (MIPIYLRQKLISYALIYLVAIQPIMPVMA), serve as a signal peptide directing secretion. Positions 35–320 (AQGSTALDKA…AQGNITLNSH (286 aa)) are two-partner system transport domain (TPS). Residues 573 to 1074 (GNVVAQEHAQ…MVLNTASLLN (502 aa)) form an FHA-1 region. Residues 1075–1342 (RRDGFSVTEK…KPLTRAQLSD (268 aa)) are receptor binding domain (RBD). Positions 1343–1528 (YPLPDSNNGL…LAKAEQAHLQ (186 aa)) are YP domain. Residues 1529–1751 (GSVISGNKVE…ATLQAERDVN (223 aa)) are periplasmic FHA-1 repeat (pFR). The segment covering 1759–1770 (TRNQHIDSEDKT) has biased composition (basic and acidic residues). Disordered regions lie at residues 1759–1787 (TRNQ…LTAS) and 1992–2012 (SKSS…SASA). The FHA-2 stretch occupies residues 1762-2314 (QHIDSEDKTT…DSDNYNSIQK (553 aa)). The segment covering 1771–1782 (TGYTRSTLSSGG) has biased composition (polar residues). The short motif at 2694–2697 (VEDN) is the VEDN CT cleavage motif element. The segment at 2694 to 2963 (VEDNNLSFGK…TGRVRNFHPN (270 aa)) is C-terminal effector domain (CT).

The protein in the N-terminal section; belongs to the CdiA toxin family. In the C-terminal section; belongs to the bacterial EndoU family. Forms a 1:1 complex with cognate immunity protein CdiI.

The protein resides in the secreted. Its subcellular location is the target cell. It localises to the target cell cytoplasm. Functionally, toxic component of a toxin-immunity protein module, which functions as a cellular contact-dependent growth inhibition (CDI) system. CDI modules allow bacteria to communicate with and inhibit the growth of closely related neighboring bacteria in a contact-dependent fashion. Targeting of the CT domain (residues 2824-2963) in the absence of immunity protein inhibits cell growth and causes tRNA(UUC-Glu) cleavage in the anticodon loop; expression of cognate immunity protein CdiI-43969 neutralizes growth inhibition and tRNA(UUC-Glu) remains intact, whereas non-cognate immunity proteins do not confer protection from the toxic effects. The CdiA protein is thought to be exported from the cell through the central lumen of CdiB, the other half of its two-partner system (TPS). The TPS domain probably remains associated with CdiB while the FHA-1 domain forms an extended filament with the receptor-binding domain (RBD) at its extremity; in the secretion arrested state the C-terminus of the RBD and YP domains form a hairpin-like structure as the FHA-2, PT and CT domains are periplasmic. The YP domain is probably responsible for this arrest at the point where it re-enters the host cell periplasm. Upon binding to a target cell outer membrane receptor a signal is transmitted to activate secretion. The filament elongates slightly, the rest of CdiA is secreted and the FHA-2 domain becomes stably associated with the target cell's outer membrane where it facilitates entry of the toxic CT domain into the target cell periplasm. From there the toxic CT domain is cleaved and gains access to the target cell cytoplasm via an inner membrane protein. This is tRNA nuclease CdiA from Yersinia mollaretii (strain ATCC 43969 / DSM 18520 / CIP 103324 / CNY 7263 / WAIP 204).